We begin with the raw amino-acid sequence, 623 residues long: MGIKGLTKFIADAAPNAIKEIKIENLMGRVVAIDASMSLYQFIIAIRDSEQYGNLTNESGETTSHISGLMSRSIKLMENGLKPIYVFDGAPPELKGSELEKRGEKRQKAEELLKKAKEEGNLEEIKKQSGRTVRVTRKQNEEAKKLLTLMGIPVVEAPCEAESQCAFLTKYNLAHATATEDADALVFGTKILIRNLNANASSANQNKNKNSSKRGYILTEINLEQVLKGLNLSMNEFIDFCILCGCDYCDTIKGIGSKTAYNLIKEYNSIEKIIENIDKNKYQVPSNFRFVEARDSFINPKVLPKEEVKIDWCEPKIEELKNFLIKDYNFNEVRVTNYINRLLKARKVTTQRRLDNFFTACTKKSTKLVIEESQSQSKTQKEAKSKRKGKKRDAPNDGAAKLNSKQSKKTKVEKEPKREKKDEEAPNGEAHNGDNNEDEETPGMGARDPFDTDDEEDNPSPNFFHQKSDSESGNVKKEKTEQEGNATTAGDVYNYPNGKDTAGSNTHLSSNSTLHSCNNVGSEKAPNEGMHTVGSSAPEAGTNHVGINHVGTNHVGINHVGTNHVGTNHVGSGDLFPPNVADCANNNADKAQPEMKKKNMLFLLPYCPKNVTNVKKRKSVQRC.

The segment at 1–106 is N-domain; it reads MGIKGLTKFI…SELEKRGEKR (106 aa). Aspartate 34 is a Mg(2+) binding site. Positions 47 and 72 each coordinate DNA. Mg(2+) contacts are provided by aspartate 88, glutamate 160, glutamate 162, aspartate 181, and aspartate 183. Positions 124 to 267 are I-domain; that stretch reads EIKKQSGRTV…KTAYNLIKEY (144 aa). Glutamate 160 provides a ligand contact to DNA. DNA contacts are provided by glycine 245 and aspartate 247. Aspartate 247 is a Mg(2+) binding site. The tract at residues 350 to 358 is interaction with PCNA; the sequence is TQRRLDNFF. Residues 368-517 are disordered; it reads LVIEESQSQS…LSSNSTLHSC (150 aa). Basic and acidic residues-rich tracts occupy residues 410 to 424 and 466 to 482; these read TKVE…KDEE and QKSD…KTEQ. The span at 502–517 shows a compositional bias: polar residues; sequence AGSNTHLSSNSTLHSC.

The protein belongs to the XPG/RAD2 endonuclease family. FEN1 subfamily. Interacts with PCNA. Three molecules of FEN1 bind to one PCNA trimer with each molecule binding to one PCNA monomer. PCNA stimulates the nuclease activity without altering cleavage specificity. Mg(2+) serves as cofactor. Phosphorylated. Phosphorylation upon DNA damage induces relocalization to the nuclear plasma.

The protein localises to the nucleus. The protein resides in the nucleolus. It localises to the nucleoplasm. Its subcellular location is the mitochondrion. Structure-specific nuclease with 5'-flap endonuclease and 5'-3' exonuclease activities involved in DNA replication and repair. During DNA replication, cleaves the 5'-overhanging flap structure that is generated by displacement synthesis when DNA polymerase encounters the 5'-end of a downstream Okazaki fragment. It enters the flap from the 5'-end and then tracks to cleave the flap base, leaving a nick for ligation. Also involved in the long patch base excision repair (LP-BER) pathway, by cleaving within the apurinic/apyrimidinic (AP) site-terminated flap. Acts as a genome stabilization factor that prevents flaps from equilibrating into structures that lead to duplications and deletions. Also possesses 5'-3' exonuclease activity on nicked or gapped double-stranded DNA, and exhibits RNase H activity. Also involved in replication and repair of rDNA and in repairing mitochondrial DNA. The chain is Flap endonuclease 1 from Plasmodium vivax (strain Salvador I).